The chain runs to 283 residues: 4-diphosphocytidyl-2-C-methyl-D-erythritol kinase (283 aa).

K10 is an active-site residue. Residue 95 to 105 (PVAAGLGGGSS) participates in ATP binding. D137 is an active-site residue.

The protein belongs to the GHMP kinase family. IspE subfamily.

It catalyses the reaction 4-CDP-2-C-methyl-D-erythritol + ATP = 4-CDP-2-C-methyl-D-erythritol 2-phosphate + ADP + H(+). It functions in the pathway isoprenoid biosynthesis; isopentenyl diphosphate biosynthesis via DXP pathway; isopentenyl diphosphate from 1-deoxy-D-xylulose 5-phosphate: step 3/6. In terms of biological role, catalyzes the phosphorylation of the position 2 hydroxy group of 4-diphosphocytidyl-2C-methyl-D-erythritol. The protein is 4-diphosphocytidyl-2-C-methyl-D-erythritol kinase of Pediococcus pentosaceus (strain ATCC 25745 / CCUG 21536 / LMG 10740 / 183-1w).